The sequence spans 79 residues: Protein FAM236C (79 aa).

The disordered stretch occupies residues 19–48; sequence KGPQKDPEELVAVSDTAEDPSSGTGLPREP.

It belongs to the FAM236 family.

The chain is Protein FAM236C from Homo sapiens (Human).